A 726-amino-acid chain; its full sequence is Germacradienol/geosmin synthase (726 aa).

The interval Thr-2–Leu-354 is germacradienol/germacrene D synthase. Mg(2+) contacts are provided by Asp-86, Glu-91, Asn-267, Thr-271, Gln-276, Asp-455, Asn-598, Ser-602, and Glu-606. Residues Asp-86–Glu-91 carry the DDXXD motif 1; degenerate motif. Residues Ala-355–His-726 form a geosmin synthase region. The DDXXD motif 2; degenerate motif lies at Asp-455 to Pro-459.

It belongs to the terpene synthase family. The cofactor is Mg(2+).

It carries out the reaction (2E,6E)-farnesyl diphosphate + H2O = (1E,4S,5E,7R)-germacra-1(10),5-dien-11-ol + diphosphate. It catalyses the reaction (1E,4S,5E,7R)-germacra-1(10),5-dien-11-ol + H2O = (-)-geosmin + acetone. The enzyme catalyses (2E,6E)-farnesyl diphosphate = (-)-germacrene D + diphosphate. It functions in the pathway secondary metabolite biosynthesis; geosmin biosynthesis. It participates in sesquiterpene biosynthesis; germacradienol biosynthesis; germacradienol from farnesyl diphosphate: step 1/1. The protein operates within sesquiterpene biosynthesis; germacrene D biosynthesis; germacrene D from farnesyl diphosphate: step 1/1. In terms of biological role, tow-domain protein where the N-terminal domain catalyzes the cyclization of farnesyl diphosphate (FPP) to a 85:15 mixture of the sesquiterpene alcohol germacradienol and the sesquiterpene hydrocarbon germacrene D. The C-terminal domain partially converts the germacradienol formed into geosmin, the characteristic odoriferous ('earthy aroma') constituent of Streptomyces species. This is Germacradienol/geosmin synthase (cyc2) from Streptomyces coelicolor (strain ATCC BAA-471 / A3(2) / M145).